The chain runs to 113 residues: MSEIQNKAETAAQDVQQKLEETKESLQNKGQEVKEQAEASIDNLKNEATPEAEQVKKEEQNIADGVEQKKTEAANKVEETKKQASAAVSEKKETKKEGGFLKKLNRKIASIFN.

Polar residues predominate over residues 1-16 (MSEIQNKAETAAQDVQ). The segment at 1–96 (MSEIQNKAET…AVSEKKETKK (96 aa)) is disordered. S2 is modified (N-acetylserine). Residue S2 is modified to Phosphoserine. Residues 2-97 (SEIQNKAETA…VSEKKETKKE (96 aa)) adopt a coiled-coil conformation. A compositionally biased stretch (basic and acidic residues) spans 17 to 37 (QKLEETKESLQNKGQEVKEQA). Residues K18 and K23 each participate in a glycyl lysine isopeptide (Lys-Gly) (interchain with G-Cter in ubiquitin) cross-link. Position 25 is a phosphoserine (S25). Residues K29 and K34 each participate in a glycyl lysine isopeptide (Lys-Gly) (interchain with G-Cter in ubiquitin) cross-link. Position 40 is a phosphoserine (S40). K45 participates in a covalent cross-link: Glycyl lysine isopeptide (Lys-Gly) (interchain with G-Cter in ubiquitin). Position 49 is a phosphothreonine (T49). Over residues 53 to 82 (EQVKKEEQNIADGVEQKKTEAANKVEETKK) the composition is skewed to basic and acidic residues. Glycyl lysine isopeptide (Lys-Gly) (interchain with G-Cter in ubiquitin) cross-links involve residues K57 and K82.

Interacts with MID2. Phosphorylation of Ser-25 is induced 2-fold in response to mating pheromone.

It localises to the cell membrane. Its function is as follows. Acts antagonistically to MID2 in signaling cell wall stress to the PKC1-MPK1 cell integrity pathway. The chain is Protein ZEO1 (ZEO1) from Saccharomyces cerevisiae (strain ATCC 204508 / S288c) (Baker's yeast).